Reading from the N-terminus, the 484-residue chain is UDP-N-acetylmuramate--L-alanine ligase (484 aa).

Residue 126–132 (GTHGKTT) participates in ATP binding.

It belongs to the MurCDEF family.

The protein localises to the cytoplasm. The catalysed reaction is UDP-N-acetyl-alpha-D-muramate + L-alanine + ATP = UDP-N-acetyl-alpha-D-muramoyl-L-alanine + ADP + phosphate + H(+). It participates in cell wall biogenesis; peptidoglycan biosynthesis. Its function is as follows. Cell wall formation. This Tolumonas auensis (strain DSM 9187 / NBRC 110442 / TA 4) protein is UDP-N-acetylmuramate--L-alanine ligase.